The primary structure comprises 514 residues: Voltage-gated potassium channel regulatory subunit KCNG1 (514 aa).

The Cytoplasmic portion of the chain corresponds to 1–224; it reads MTLLPGDNSH…DMVERPHSGL (224 aa). The span at 180–196 shows a compositional bias: acidic residues; sequence MEREEEEEPLDSEDQES. Positions 180-205 are disordered; the sequence is MEREEEEEPLDSEDQESEGPSASEGR. Residues 225–246 traverse the membrane as a helical segment; it reads PGKVFACLSVLFVTVTAVNLSV. Over 247 to 267 the chain is Extracellular; the sequence is STLPSLREEEEQGQCSQMCHN. The helical transmembrane segment at 268–289 threads the bilayer; that stretch reads VFIVESVCVGWFSLEFLLRFIQ. Residues 290–300 are Cytoplasmic-facing; sequence APSKFAFLRSP. The helical transmembrane segment at 301–321 threads the bilayer; sequence LTLIDLVAILPYYVTLLVDGA. Residues 322 to 338 are Extracellular-facing; it reads ASSRRKPSTGNSYLDKV. The helical; Voltage-sensor transmembrane segment at 339-359 threads the bilayer; sequence GLVLRVLRALRILYVMRLARH. Residues 360-374 are Cytoplasmic-facing; the sequence is SLGLQTLGLTARRCT. A helical membrane pass occupies residues 375 to 396; that stretch reads REFGLLLLFLCVAIALFAPLLY. Residues 397 to 411 lie on the Extracellular side of the membrane; sequence VIENEMADSPEFTSI. An intramembrane region (helical) is located at residues 412–423; that stretch reads PACYWWAVITMT. The Selectivity filter signature appears at 424 to 429; the sequence is TVGYGD. An intramembrane segment occupies 424–431; sequence TVGYGDMV. Residues 432 to 438 are Extracellular-facing; it reads PRSTPGQ. Residues 439-467 traverse the membrane as a helical segment; that stretch reads VVALSSILSGILLMAFPVTSIFHTFSRSY. Topologically, residues 468–514 are cytoplasmic; that stretch reads LELKQEQERVLIRRAQYLIKTKSQLSGMSQDSDILFGSASSDTRDNN.

It belongs to the potassium channel family. G (TC 1.A.1.2) subfamily. Kv6.1/KCNG1 sub-subfamily. In terms of assembly, heterotetramer with KCNB1 or KCNB2.

It is found in the cell membrane. Regulatory alpha-subunit of the voltage-gated potassium (Kv) channel which, when coassembled with KCNB1 or KCNB2, can modulate their expression and their gating kinetics by acting on deactivation upon repolarization and inactivation during maintained depolarization. Potassium channel subunit that does not form functional channels by itself. In Mus musculus (Mouse), this protein is Voltage-gated potassium channel regulatory subunit KCNG1.